Reading from the N-terminus, the 309-residue chain is Porphobilinogen deaminase (309 aa).

Cysteine 234 carries the post-translational modification S-(dipyrrolylmethanemethyl)cysteine.

This sequence belongs to the HMBS family. In terms of assembly, monomer. It depends on dipyrromethane as a cofactor.

It carries out the reaction 4 porphobilinogen + H2O = hydroxymethylbilane + 4 NH4(+). Its pathway is porphyrin-containing compound metabolism; protoporphyrin-IX biosynthesis; coproporphyrinogen-III from 5-aminolevulinate: step 2/4. Tetrapolymerization of the monopyrrole PBG into the hydroxymethylbilane pre-uroporphyrinogen in several discrete steps. In Mycobacterium bovis (strain ATCC BAA-935 / AF2122/97), this protein is Porphobilinogen deaminase (hemC).